We begin with the raw amino-acid sequence, 263 residues long: Shikimate dehydrogenase (NADP(+)) (263 aa).

Shikimate contacts are provided by residues 16-18 and threonine 65; that span reads SKS. The active-site Proton acceptor is lysine 69. Shikimate contacts are provided by asparagine 90 and aspartate 105. NADP(+) contacts are provided by residues 125–129 and leucine 208; that span reads GSGGS. Tyrosine 210 is a binding site for shikimate. Position 230 (glycine 230) interacts with NADP(+).

Belongs to the shikimate dehydrogenase family. As to quaternary structure, homodimer.

The enzyme catalyses shikimate + NADP(+) = 3-dehydroshikimate + NADPH + H(+). Its pathway is metabolic intermediate biosynthesis; chorismate biosynthesis; chorismate from D-erythrose 4-phosphate and phosphoenolpyruvate: step 4/7. Involved in the biosynthesis of the chorismate, which leads to the biosynthesis of aromatic amino acids. Catalyzes the reversible NADPH linked reduction of 3-dehydroshikimate (DHSA) to yield shikimate (SA). The sequence is that of Shikimate dehydrogenase (NADP(+)) from Helicobacter acinonychis (strain Sheeba).